We begin with the raw amino-acid sequence, 380 residues long: Cytochrome b (380 aa).

The next 4 helical transmembrane spans lie at 34–54, 78–99, 114–134, and 179–199; these read FGSLLAVCLMTQILTGLLLAM, WLIRNLHANGASFFFICIFLHI, WNTGVILLLTLMATAFVGYVL, and FFALHFLLPFAIAGITIIHLT. Heme b-binding residues include histidine 84 and histidine 98. The heme b site is built by histidine 183 and histidine 197. Histidine 202 serves as a coordination point for a ubiquinone. 4 helical membrane passes run 227 to 247, 289 to 309, 321 to 341, and 348 to 368; these read FKDILGLTLMLTPFLTLALFS, LGGVLALAASVLILFLIPFLH, LSQTLFWLLVANLLILTWIGS, and FIIIGQMASLSYFTILLILFP.

The protein belongs to the cytochrome b family. In terms of assembly, the cytochrome bc1 complex contains 11 subunits: 3 respiratory subunits (MT-CYB, CYC1 and UQCRFS1), 2 core proteins (UQCRC1 and UQCRC2) and 6 low-molecular weight proteins (UQCRH/QCR6, UQCRB/QCR7, UQCRQ/QCR8, UQCR10/QCR9, UQCR11/QCR10 and a cleavage product of UQCRFS1). This cytochrome bc1 complex then forms a dimer. Heme b serves as cofactor.

Its subcellular location is the mitochondrion inner membrane. In terms of biological role, component of the ubiquinol-cytochrome c reductase complex (complex III or cytochrome b-c1 complex) that is part of the mitochondrial respiratory chain. The b-c1 complex mediates electron transfer from ubiquinol to cytochrome c. Contributes to the generation of a proton gradient across the mitochondrial membrane that is then used for ATP synthesis. This is Cytochrome b (MT-CYB) from Gallus gallus (Chicken).